Consider the following 185-residue polypeptide: Ribosome-recycling factor (185 aa).

The tract at residues 137 to 166 (DGLKKAEKDGDIGQDESRGQSEKVQKMTDD) is disordered.

This sequence belongs to the RRF family.

The protein resides in the cytoplasm. Responsible for the release of ribosomes from messenger RNA at the termination of protein biosynthesis. May increase the efficiency of translation by recycling ribosomes from one round of translation to another. The chain is Ribosome-recycling factor from Agrobacterium fabrum (strain C58 / ATCC 33970) (Agrobacterium tumefaciens (strain C58)).